Reading from the N-terminus, the 440-residue chain is Xaa-Pro dipeptidase (440 aa).

Mn(2+)-binding residues include Asp241, Asp252, His333, Glu378, and Glu417.

The protein belongs to the peptidase M24B family. Bacterial-type prolidase subfamily. The cofactor is Mn(2+).

The enzyme catalyses Xaa-L-Pro dipeptide + H2O = an L-alpha-amino acid + L-proline. Functionally, splits dipeptides with a prolyl residue in the C-terminal position. The protein is Xaa-Pro dipeptidase of Glaesserella parasuis serovar 5 (strain SH0165) (Haemophilus parasuis).